The chain runs to 89 residues: NADH-ubiquinone oxidoreductase chain 4L (89 aa).

The next 3 membrane-spanning stretches (helical) occupy residues 1-21 (MNIT…NRKN), 22-42 (IILM…LILV), and 57-77 (IYII…LVAF).

It belongs to the complex I subunit 4L family.

It localises to the mitochondrion membrane. It catalyses the reaction a ubiquinone + NADH + 5 H(+)(in) = a ubiquinol + NAD(+) + 4 H(+)(out). Its function is as follows. Core subunit of the mitochondrial membrane respiratory chain NADH dehydrogenase (Complex I) that is believed to belong to the minimal assembly required for catalysis. Complex I functions in the transfer of electrons from NADH to the respiratory chain. The immediate electron acceptor for the enzyme is believed to be ubiquinone. In Neurospora crassa (strain ATCC 24698 / 74-OR23-1A / CBS 708.71 / DSM 1257 / FGSC 987), this protein is NADH-ubiquinone oxidoreductase chain 4L (ndh-4L).